Reading from the N-terminus, the 353-residue chain is Protein MGF 360-11L (353 aa).

Residues 59–88 form an ANK repeat; that stretch reads ELNTVLMKAAKENNHDLIRLFVEWGADINY.

The protein belongs to the asfivirus MGF 360 family. In terms of assembly, interacts with host TBK1 ad IRF7.

Functionally, plays a role in virus cell tropism, and may be required for efficient virus replication in macrophages. In addition, inhibits the phosphorylation of host TBK1 and IRF7 and thereby negatively regulates the host cGAS signaling pathway and antagonizes IFN-mediated antiviral activity. The protein is Protein MGF 360-11L of African swine fever virus (isolate Pig/Kenya/KEN-50/1950) (ASFV).